Here is a 189-residue protein sequence, read N- to C-terminus: GTP cyclohydrolase 1 (189 aa).

The Zn(2+) site is built by cysteine 79, histidine 82, and cysteine 150.

It belongs to the GTP cyclohydrolase I family. As to quaternary structure, homomer.

The catalysed reaction is GTP + H2O = 7,8-dihydroneopterin 3'-triphosphate + formate + H(+). It functions in the pathway cofactor biosynthesis; 7,8-dihydroneopterin triphosphate biosynthesis; 7,8-dihydroneopterin triphosphate from GTP: step 1/1. This chain is GTP cyclohydrolase 1, found in Rickettsia africae (strain ESF-5).